We begin with the raw amino-acid sequence, 443 residues long: 3-isopropylmalate dehydratase large subunit (443 aa).

3 residues coordinate [4Fe-4S] cluster: Cys-347, Cys-407, and Cys-410.

Belongs to the aconitase/IPM isomerase family. LeuC type 1 subfamily. Heterodimer of LeuC and LeuD. [4Fe-4S] cluster serves as cofactor.

The catalysed reaction is (2R,3S)-3-isopropylmalate = (2S)-2-isopropylmalate. Its pathway is amino-acid biosynthesis; L-leucine biosynthesis; L-leucine from 3-methyl-2-oxobutanoate: step 2/4. Catalyzes the isomerization between 2-isopropylmalate and 3-isopropylmalate, via the formation of 2-isopropylmaleate. The sequence is that of 3-isopropylmalate dehydratase large subunit from Buchnera aphidicola subsp. Uroleucon sonchi.